Reading from the N-terminus, the 165-residue chain is Destrin (165 aa).

A2 carries the N-acetylalanine modification. S3 carries the phosphoserine modification. The ADF-H domain occupies 4-153 (GVQVADEVCR…NRACIAEKLG (150 aa)). K19 bears the N6-acetyllysine mark. Residues 30–34 (KKRKK) carry the Nuclear localization signal motif.

The protein belongs to the actin-binding proteins ADF family. ISGylated.

In terms of biological role, actin-depolymerizing protein. Severs actin filaments (F-actin) and binds to actin monomers (G-actin). Acts in a pH-independent manner. The chain is Destrin (DSTN) from Bos taurus (Bovine).